A 512-amino-acid polypeptide reads, in one-letter code: MGELRFKHLFWGSFVESGGTFQTVLIFLLIPCSLTVDYRAAPILSNTTFLWIWNVPTERCVGNVNDPIDLSFFSLIGSPRKTATGQPVTLFYVDRLGLYPHIDANQAEHYGGIPQRGDYQAHLRKAKTDIEHYIPDDKLGLAIIDWEEWRPTWLRNWKPKDNYRNKSIELVQSTNPGLSITEATQKAIQQFEEAGRKFMEGTLHLGKFLRPNQLWGYYLFPDCYNNKFQDPKYDGQCPAVEKKRNDNLKWLWKASTGLYPSVYLKKDLKSNRQATLYVRYRVVEAIRVSKVGNASDPVPIFVYIRLVFTDRTSEYLLEDDLVNTIGEIVALGTSGIIIWDAMSLAQRAAGCPILHKYMQTTLNPYIVNVTLAAKMCSQTLCNEKGMCSRRKESSDVYLHLNPSHFDIMLTETGKYEVLGNPRVGDLEYFSEHFKCSCFSRMTCKETSDVKNVQDVNVCVGDNVCIKAKVEPNPAFYLLPGKSLLFMTTLGHVLYHLPQDIFVFPRKTLVSTP.

An N-terminal signal peptide occupies residues 1 to 35; sequence MGELRFKHLFWGSFVESGGTFQTVLIFLLIPCSLT. The N-linked (GlcNAc...) asparagine glycan is linked to N46. Disulfide bonds link C60–C351 and C223–C237. Catalysis depends on E147, which acts as the Proton donor. Residue N165 is glycosylated (N-linked (GlcNAc...) asparagine). N293 and N368 each carry an N-linked (GlcNAc...) asparagine glycan. Disulfide bonds link C376-C387, C381-C435, and C437-C464.

It belongs to the glycosyl hydrolase 56 family.

It localises to the cell membrane. The enzyme catalyses Random hydrolysis of (1-&gt;4)-linkages between N-acetyl-beta-D-glucosamine and D-glucuronate residues in hyaluronate.. Functionally, involved in sperm-egg adhesion. Upon fertilization sperm must first penetrate a layer of cumulus cells that surrounds the egg before reaching the zona pellucida. The cumulus cells are embedded in a matrix containing hyaluronic acid which is formed prior to ovulation. This protein aids in penetrating the layer of cumulus cells by digesting hyaluronic acid. The sequence is that of Hyaluronidase PH-20 (Spam1) from Mus musculus (Mouse).